Consider the following 686-residue polypeptide: NADH-ubiquinone oxidoreductase chain 5 (686 aa).

Transmembrane regions (helical) follow at residues 3 to 23 (LIIL…GRFV), 40 to 60 (ALLS…LFSF), 101 to 121 (ITLP…LFSV), 139 to 159 (LFTF…LFVG), 160 to 180 (WEGI…RIQA), 198 to 218 (LSIA…STVF), 222 to 242 (AYIN…GAMA), 261 to 281 (TPVS…YLLI), 293 to 313 (VLLV…TCGL), 321 to 341 (IIAF…GLSQ), 350 to 370 (LFHA…IHAF), 382 to 402 (LINF…SLLA), 432 to 452 (ILGS…ISLV), 472 to 492 (ITVI…GYVT), 526 to 546 (LIFK…ALYL), 635 to 655 (ALYI…PMLV), and 665 to 685 (LIIL…KKLS).

It belongs to the complex I subunit 5 family.

The protein resides in the mitochondrion inner membrane. It catalyses the reaction a ubiquinone + NADH + 5 H(+)(in) = a ubiquinol + NAD(+) + 4 H(+)(out). In terms of biological role, core subunit of the mitochondrial membrane respiratory chain NADH dehydrogenase (Complex I) that is believed to belong to the minimal assembly required for catalysis. Complex I functions in the transfer of electrons from NADH to the respiratory chain. The immediate electron acceptor for the enzyme is believed to be ubiquinone. The polypeptide is NADH-ubiquinone oxidoreductase chain 5 (ND5) (Schizophyllum commune (Split gill fungus)).